The sequence spans 574 residues: Transmembrane glycoprotein NMB (574 aa).

The first 22 residues, 1–22 (MESLCGVLGFLLLAAGLPLQAA), serve as a signal peptide directing secretion. Over 23–502 (KRFRDVLGHE…DPDSPLRAVN (480 aa)) the chain is Extracellular. Residues Asn-93, Asn-134, Asn-200, Asn-249, Asn-275, Asn-296, Asn-300, Asn-306, and Asn-312 are each glycosylated (N-linked (GlcNAc...) asparagine). The 89-residue stretch at 250–338 (LSDEIFLRDL…STPPPPSTPP (89 aa)) folds into the PKD domain. The segment at 320–353 (PGPCPPPSPSTPPPPSTPPSPPPSPLPTLSTPSP) is disordered. A compositionally biased stretch (pro residues) spans 321–345 (GPCPPPSPSTPPPPSTPPSPPPSPL). 2 N-linked (GlcNAc...) asparagine glycosylation sites follow: Asn-463 and Asn-471. A helical membrane pass occupies residues 503 to 523 (GVLISIGCLAVLVTMVTILLY). The Cytoplasmic segment spans residues 524–574 (KKHKAYKPIGNCPRNTVKGKGLSVLLSHAKAPFFRGDQEKDPLLQDKPRTL). Ser-546 is modified (phosphoserine). The short motif at 558–560 (RGD) is the Cell attachment site element.

The protein belongs to the PMEL/NMB family. In terms of tissue distribution, may be up-regulated in bone metastatic breast cancer cells.

It is found in the cell membrane. The protein localises to the melanosome membrane. It localises to the early endosome membrane. In terms of biological role, could be a melanogenic enzyme. This Mus musculus (Mouse) protein is Transmembrane glycoprotein NMB (Gpnmb).